The chain runs to 217 residues: Insulin-like growth factor 2.S (217 aa).

A signal peptide spans 1 to 56; the sequence is MEQLSCKHRSSSVEAEAQLCRQTESRSTQLPRMSVMRHLFLLSITFLVYTLDSAKA. The segment at 57–83 is b; it reads YRATETLCGGELVDTLQFVCGDRGFYF. 3 cysteine pairs are disulfide-bonded: Cys64–Cys103, Cys76–Cys116, and Cys102–Cys107. The segment at 84-96 is c; sequence STNNGRSNRRPNR. An a region spans residues 97-117; that stretch reads GIVDVCCFKSCDLELLETYCA. The tract at residues 118-123 is d; that stretch reads KPTKNE. Positions 124 to 217 are cleaved as a propeptide — e peptide; that stretch reads RDVSTAPATA…LQQASEPSHN (94 aa).

Belongs to the insulin family.

It is found in the secreted. Functionally, the insulin-like growth factors, isolated from plasma, are structurally and functionally related to insulin but have a much higher growth-promoting activity. Promotes anterior neural development. Acts as a ligand for integrin which is required for IGF2 signaling. The protein is Insulin-like growth factor 2.S of Xenopus laevis (African clawed frog).